Consider the following 92-residue polypeptide: Signal recognition particle 19 kDa protein (92 aa).

This sequence belongs to the SRP19 family. Part of the signal recognition particle protein translocation system, which is composed of SRP and FtsY. Archaeal SRP consists of a 7S RNA molecule of 300 nucleotides and two protein subunits: SRP54 and SRP19.

It localises to the cytoplasm. Involved in targeting and insertion of nascent membrane proteins into the cytoplasmic membrane. Binds directly to 7S RNA and mediates binding of the 54 kDa subunit of the SRP. In Haloferax volcanii (strain ATCC 29605 / DSM 3757 / JCM 8879 / NBRC 14742 / NCIMB 2012 / VKM B-1768 / DS2) (Halobacterium volcanii), this protein is Signal recognition particle 19 kDa protein.